Here is a 57-residue protein sequence, read N- to C-terminus: Temporin-ALk (57 aa).

The first 22 residues, 1–22, serve as a signal peptide directing secretion; that stretch reads MFTLKKSLLLLFFLGTINLSLC. The propeptide occupies 23–46; that stretch reads EQERNAEEERRDDLGERQAEVEKR. Serine 56 bears the Serine amide mark.

This sequence belongs to the frog skin active peptide (FSAP) family. Temporin subfamily. Expressed by the skin glands.

Its subcellular location is the secreted. Antimicrobial peptide with weak activity against Gram-positive and Gram-negative bacteria and against fungi. Has been tested against S.aureus (MIC=15.0 ug/mL), B.pumilus (no activity detected), B.cereus (no activity detected), E.coli (MIC=30.0 ug/mL), B.dysenteriae (MIC=60.0 ug/mL), A.cacoaceticus (MIC=75.0 ug/mL), P.aeruginosa (MIC=25.0 ug/mL) and C.albicans (MIC=15.0 ug/mL). Also shows a weak hemolytic activity. This chain is Temporin-ALk, found in Amolops loloensis (Lolokou Sucker Frog).